Consider the following 552-residue polypeptide: Hyaluronan synthase 2 (552 aa).

Residues 1-11 (MHCERFLCILR) are Cytoplasmic-facing. A helical membrane pass occupies residues 12 to 32 (IIGTTLFGVSLLLGITAAYIV). The Extracellular portion of the chain corresponds to 33–45 (GYQFIQTDNYYFS). The helical transmembrane segment at 46–66 (FGLYGAFLASHLIIQSLFAFL) threads the bilayer. At 67–374 (EHRKMKKSLE…NAMWFHKHHL (308 aa)) the chain is on the cytoplasmic side. Thr-110 carries the phosphothreonine modification. Lys-190 is covalently cross-linked (Glycyl lysine isopeptide (Lys-Gly) (interchain with G-Cter in ubiquitin)). O-linked (GlcNAc) serine glycosylation is present at Ser-221. Position 328 is a phosphothreonine (Thr-328). Residues 375–395 (WMTYEAIITGFFPFFLIATVI) traverse the membrane as a helical segment. At 396–402 (QLFYRGK) the chain is on the extracellular side. A helical membrane pass occupies residues 403 to 423 (IWNILLFLLTVQLVGLIKSSF). Topologically, residues 424-429 (ASCLRG) are cytoplasmic. The helical transmembrane segment at 430-450 (NIVMVFMSLYSVLYMSSLLPA) threads the bilayer. Residues 451 to 475 (KMFAIATINKAGWGTSGRKTIVVNF) lie on the Extracellular side of the membrane. Residues 476 to 496 (IGLIPVSVWFTILLGGVIFTI) traverse the membrane as a helical segment. At 497–510 (YKESKRPFSESKQT) the chain is on the cytoplasmic side. A helical membrane pass occupies residues 511-531 (VLIVGTLLYACYWVMLLTLYV). The Extracellular portion of the chain corresponds to 532 to 552 (VLINKCGRRKKGQQYDMVLDV).

This sequence belongs to the NodC/HAS family. Homodimer; dimerization promotes enzymatic activity. Forms heterodimer with HAS3. Forms heterodimer with HAS1. Mg(2+) is required as a cofactor. In terms of processing, phosphorylation at Thr-328 is essential for hyaluronan synthase activity. Phosphorylation at Thr-110 is required for transport from ER to Golgi. O-GlcNAcylation at Ser-221 increases the stability of HAS2 and plasma membrane localization. Post-translationally, ubiquitination at Lys-190; this ubiquitination is essential for hyaluronan synthase activity and homo- or hetero-oligomerization. Can also be poly-ubiquitinated. Deubiquitinated by USP17 and USP4. USP17 efficiently removes 'Lys-63'- and 'Lys-48'-linked polyubiquitin chains, whereas USP4 preferentially removes monoubiquitination and, partially, both 'Lys-63'- and 'Lys-48'-linked polyubiquitin chain. As to expression, expressed in fibroblasts.

Its subcellular location is the cell membrane. It is found in the endoplasmic reticulum membrane. The protein resides in the vesicle. It localises to the golgi apparatus membrane. The protein localises to the lysosome. The enzyme catalyses [hyaluronan](n) + UDP-N-acetyl-alpha-D-glucosamine = N-acetyl-beta-D-glucosaminyl-(1-&gt;4)-[hyaluronan](n) + UDP + H(+). It carries out the reaction N-acetyl-beta-D-glucosaminyl-(1-&gt;4)-[hyaluronan](n) + UDP-alpha-D-glucuronate = [hyaluronan](n+1) + UDP + H(+). It functions in the pathway glycan biosynthesis; hyaluronan biosynthesis. Its activity is regulated as follows. Regulated by several post-translational modifications such as ubiquitination/deubiquitination, phosphorylation and O-GlcNAcylation. The enzymatic activity depends on the availability of UDP-GlcUA and UDP-GlcNAc. Its function is as follows. Catalyzes the addition of GlcNAc or GlcUA monosaccharides to the nascent hyaluronan polymer. Therefore, it is essential to hyaluronan synthesis a major component of most extracellular matrices that has a structural role in tissues architectures and regulates cell adhesion, migration and differentiation. This is one of three isoenzymes responsible for cellular hyaluronan synthesis and it is particularly responsible for the synthesis of high molecular mass hyaluronan. The chain is Hyaluronan synthase 2 from Homo sapiens (Human).